We begin with the raw amino-acid sequence, 286 residues long: Small ribosomal subunit protein uS3 (286 aa).

The KH type-2 domain maps to 39–107 (VREYLKKKLA…PVHVNIEEIR (69 aa)). The interval 213 to 286 (QAGAGTAAPQ…KPGVNDAAAS (74 aa)) is disordered. The span at 241-262 (GRADARSDGKAGEKKGPRKSDN) shows a compositional bias: basic and acidic residues.

This sequence belongs to the universal ribosomal protein uS3 family. As to quaternary structure, part of the 30S ribosomal subunit. Forms a tight complex with proteins S10 and S14.

Its function is as follows. Binds the lower part of the 30S subunit head. Binds mRNA in the 70S ribosome, positioning it for translation. This chain is Small ribosomal subunit protein uS3, found in Nitrosospira multiformis (strain ATCC 25196 / NCIMB 11849 / C 71).